The following is a 524-amino-acid chain: Cytochrome P450 monooxygenase ATR4 (524 aa).

Residues 13-36 form a helical membrane-spanning segment; the sequence is IITYLDSLTWVGMALPLFSLCWAI. N-linked (GlcNAc...) asparagine glycosylation is found at N291, N444, and N454.

It belongs to the cytochrome P450 family. Heme is required as a cofactor.

Its subcellular location is the membrane. It functions in the pathway mycotoxin biosynthesis. In terms of biological role, cytochrome P450 monooxygenase; part of the core atranone cluster (CAC) which products are predicted to catalyze most or all steps of mycotoxin atranone synthesis, starting from geranylgeranyl pyrophosphate (GGPP). The initial cyclization of GGPP to dolabellane is probably performed by the terpene cyclase ATR13. The Baeyer-Villiger oxidation near the end of the atranone synthesis, which converts atranones D and E to atranones F and G is predicted to be catalyzed by the monooxygenase ATR8. Of the CAC's other predicted gene products, the reducing PKS ATR6 might synthesize a polyketide chain. This polyketide is probably transferred onto the atranone backbone by the polyketide transferase ATR5. Other predicted CAC products include 4 oxygenases (ATR2, ATR3, ATR4, and ATR14), 3 short-chain reductases (ATR7, ATR9, and ATR10), and a methyltransferase (ATR12). These may all be involved in the various steps of atranone biosynthesis, although their specific roles must await experimental determination. The sequence is that of Cytochrome P450 monooxygenase ATR4 from Stachybotrys chlorohalonatus (strain IBT 40285).